The sequence spans 376 residues: Probable inactive protein kinase At3g63330 (376 aa).

In terms of domain architecture, Protein kinase spans 1–370 (MVERGPTVYL…VDEALQHPYF (370 aa)).

It belongs to the protein kinase superfamily. Ser/Thr protein kinase family.

The chain is Probable inactive protein kinase At3g63330 from Arabidopsis thaliana (Mouse-ear cress).